A 175-amino-acid chain; its full sequence is Orotate phosphoribosyltransferase (175 aa).

Residues Arg-89, Lys-90, Lys-93, and Glu-115–Ser-123 each bind 5-phospho-alpha-D-ribose 1-diphosphate. Orotate-binding residues include Thr-119 and Arg-147.

The protein belongs to the purine/pyrimidine phosphoribosyltransferase family. PyrE subfamily. Homodimer. It depends on Mg(2+) as a cofactor.

It catalyses the reaction orotidine 5'-phosphate + diphosphate = orotate + 5-phospho-alpha-D-ribose 1-diphosphate. It participates in pyrimidine metabolism; UMP biosynthesis via de novo pathway; UMP from orotate: step 1/2. Catalyzes the transfer of a ribosyl phosphate group from 5-phosphoribose 1-diphosphate to orotate, leading to the formation of orotidine monophosphate (OMP). The sequence is that of Orotate phosphoribosyltransferase from Halobacterium salinarum (strain ATCC 700922 / JCM 11081 / NRC-1) (Halobacterium halobium).